The chain runs to 89 residues: Small ribosomal subunit protein uS15 (89 aa).

It belongs to the universal ribosomal protein uS15 family. As to quaternary structure, part of the 30S ribosomal subunit. Forms a bridge to the 50S subunit in the 70S ribosome, contacting the 23S rRNA.

Its function is as follows. One of the primary rRNA binding proteins, it binds directly to 16S rRNA where it helps nucleate assembly of the platform of the 30S subunit by binding and bridging several RNA helices of the 16S rRNA. In terms of biological role, forms an intersubunit bridge (bridge B4) with the 23S rRNA of the 50S subunit in the ribosome. The protein is Small ribosomal subunit protein uS15 of Rhizobium johnstonii (strain DSM 114642 / LMG 32736 / 3841) (Rhizobium leguminosarum bv. viciae).